The primary structure comprises 313 residues: uncharacterized protein (313 aa).

2 helical membrane-spanning segments follow: residues 42 to 64 and 74 to 96; these read LVVL…LFLT and VRAY…TLYV.

It is found in the cell membrane. This is an uncharacterized protein from Treponema pallidum (strain Nichols).